A 322-amino-acid polypeptide reads, in one-letter code: HPr kinase/phosphorylase (322 aa).

Catalysis depends on residues His146 and Lys167. 161-168 provides a ligand contact to ATP; sequence GDSGLGKS. Residue Ser168 participates in Mg(2+) binding. Asp185 acts as the Proton acceptor; for phosphorylation activity. Proton donor; for dephosphorylation activity in catalysis. Residues 209–218 are important for the catalytic mechanism of both phosphorylation and dephosphorylation; sequence LEVRGLGLLD. Residue Glu210 participates in Mg(2+) binding. The active site involves Arg250. The interval 271–276 is important for the catalytic mechanism of dephosphorylation; it reads QVAAGR.

This sequence belongs to the HPrK/P family. In terms of assembly, homohexamer. It depends on Mg(2+) as a cofactor.

It carries out the reaction [HPr protein]-L-serine + ATP = [HPr protein]-O-phospho-L-serine + ADP + H(+). The catalysed reaction is [HPr protein]-O-phospho-L-serine + phosphate + H(+) = [HPr protein]-L-serine + diphosphate. In terms of biological role, catalyzes the ATP- as well as the pyrophosphate-dependent phosphorylation of a specific serine residue in HPr, a phosphocarrier protein of the phosphoenolpyruvate-dependent sugar phosphotransferase system (PTS). HprK/P also catalyzes the pyrophosphate-producing, inorganic phosphate-dependent dephosphorylation (phosphorolysis) of seryl-phosphorylated HPr (P-Ser-HPr). The polypeptide is HPr kinase/phosphorylase (Burkholderia lata (strain ATCC 17760 / DSM 23089 / LMG 22485 / NCIMB 9086 / R18194 / 383)).